The chain runs to 404 residues: MKILILNAGSSSQKSCLYDFKEKNFLDNPVEPIWKADIDWTLATGQGILTVKANGIKQKITLNSDDHHHGIAKMLGTLVEGKTKVIQHLSDISIVGHRVVHGGTDYSEATLITPDVKATIARLIPLAPTHNPSHLEGIEAIEQVLGNIPQVAVFDTAFHSQMPLEASVYPIPYEWLDKGIRRYGFHGTSHKYCAEKASQLLNKPLTHLKLITCHLGNGCSLAAIKNGISIDTTMGFTPLEGLMMGTRSGSIDPAILIYLMREYDFTFEQLNEMLNQESGLKGVSGISADLRAIFEAINQGNDRAQLALDMYLHRLRSQIGSMLASLGGLDALIFTAGIGENAAIVREKACQGFSFLGLKLDLEKNANSPVNIDISTPDSTVRILVIHTQEDWAIAQECCHWLNK.

Asn7 serves as a coordination point for Mg(2+). Lys14 provides a ligand contact to ATP. Arg98 provides a ligand contact to substrate. The active-site Proton donor/acceptor is Asp155. ATP contacts are provided by residues 214–218 (HLGNG), 289–291 (DLR), and 337–341 (GIGEN). Glu390 is a binding site for Mg(2+).

It belongs to the acetokinase family. In terms of assembly, homodimer. Mg(2+) serves as cofactor. It depends on Mn(2+) as a cofactor.

The protein resides in the cytoplasm. It carries out the reaction acetate + ATP = acetyl phosphate + ADP. The protein operates within metabolic intermediate biosynthesis; acetyl-CoA biosynthesis; acetyl-CoA from acetate: step 1/2. Functionally, catalyzes the formation of acetyl phosphate from acetate and ATP. Can also catalyze the reverse reaction. The chain is Acetate kinase from Rippkaea orientalis (strain PCC 8801 / RF-1) (Cyanothece sp. (strain PCC 8801)).